A 367-amino-acid polypeptide reads, in one-letter code: MDANTTRNESFSLDCELVNPNSTLANVYFLSAVYSMYAIIFVVALIGNSFVCYIVLSSPPMRTVTNFFILNLAIGDVLITLLCVPFTSVSLLMQYWPFGGILCPVVNYSQALSVFVSAYTLVAISIDKYMIIMWPLKPRISKRFATYIIALVWLIAGITVLPSATFTTLINDENILGTSAYEQCDKYICAEEYSKVGQEYGDLYTKVLMFLQYVIPSLVLLFTYTSIGVVIWCHRIPGEAENSRDQRIAKNKTKMIKMMVTVVCVYTICWLPYNVLMIFKEHISGSVMVYLYFPLHGLAMSHACYNPIIYCYMNARFRNGFLQVMMSIPCLRRCNSINDISKILTCRWKVRRVHLYREITRAQPTSA.

The Extracellular segment spans residues 1-35 (MDANTTRNESFSLDCELVNPNSTLANVYFLSAVYS). N-linked (GlcNAc...) asparagine glycosylation is found at asparagine 4, asparagine 8, and asparagine 21. A helical transmembrane segment spans residues 36 to 56 (MYAIIFVVALIGNSFVCYIVL). Topologically, residues 57–66 (SSPPMRTVTN) are cytoplasmic. A helical membrane pass occupies residues 67-87 (FFILNLAIGDVLITLLCVPFT). The Extracellular portion of the chain corresponds to 88–113 (SVSLLMQYWPFGGILCPVVNYSQALS). Asparagine 107 carries an N-linked (GlcNAc...) asparagine glycan. The chain crosses the membrane as a helical span at residues 114-134 (VFVSAYTLVAISIDKYMIIMW). Residues 135–143 (PLKPRISKR) lie on the Cytoplasmic side of the membrane. The chain crosses the membrane as a helical span at residues 144 to 164 (FATYIIALVWLIAGITVLPSA). Topologically, residues 165-212 (TFTTLINDENILGTSAYEQCDKYICAEEYSKVGQEYGDLYTKVLMFLQ) are extracellular. A helical transmembrane segment spans residues 213-233 (YVIPSLVLLFTYTSIGVVIWC). The Cytoplasmic segment spans residues 234-258 (HRIPGEAENSRDQRIAKNKTKMIKM). A helical transmembrane segment spans residues 259 to 279 (MVTVVCVYTICWLPYNVLMIF). At 280 to 282 (KEH) the chain is on the extracellular side. The chain crosses the membrane as a helical span at residues 283 to 303 (ISGSVMVYLYFPLHGLAMSHA). The Cytoplasmic segment spans residues 304 to 367 (CYNPIIYCYM…EITRAQPTSA (64 aa)).

This sequence belongs to the G-protein coupled receptor 1 family.

It is found in the cell membrane. Functionally, receptor for the neuropeptides RYamide-1 and RYamide-2. The activity of this receptor is mediated by G proteins which activate a phosphatidyl-inositol-calcium second messenger system. RYamide-2 is the most potent activator. The protein is RYamide receptor of Tribolium castaneum (Red flour beetle).